A 37-amino-acid chain; its full sequence is Large ribosomal subunit protein bL36 (37 aa).

The protein belongs to the bacterial ribosomal protein bL36 family.

The polypeptide is Large ribosomal subunit protein bL36 (Methylibium petroleiphilum (strain ATCC BAA-1232 / LMG 22953 / PM1)).